The sequence spans 400 residues: Queuine tRNA-ribosyltransferase catalytic subunit 1 (400 aa).

Asp103 (proton acceptor) is an active-site residue. Residues 103–107 (DSGGF), Asp157, Gln200, and Gly227 contribute to the queuine site. The tract at residues 258–264 (GVGYAVD) is RNA binding. Asp277 (nucleophile) is an active-site residue. The segment at 282–286 (TRTAR) is RNA binding; important for wobble base 34 recognition. Residues Cys315, Cys317, Cys320, and His345 each coordinate Zn(2+).

Belongs to the queuine tRNA-ribosyltransferase family. Heterodimer of a catalytic subunit qtrt1 and an accessory subunit qtrt2. Zn(2+) serves as cofactor.

It is found in the cytoplasm. The protein localises to the mitochondrion outer membrane. It catalyses the reaction guanosine(34) in tRNA + queuine = queuosine(34) in tRNA + guanine. In terms of biological role, catalytic subunit of the queuine tRNA-ribosyltransferase (TGT) that catalyzes the base-exchange of a guanine (G) residue with queuine (Q) at position 34 (anticodon wobble position) in tRNAs with GU(N) anticodons (tRNA-Asp, -Asn, -His and -Tyr), resulting in the hypermodified nucleoside queuosine (7-(((4,5-cis-dihydroxy-2-cyclopenten-1-yl)amino)methyl)-7-deazaguanosine). Catalysis occurs through a double-displacement mechanism. The nucleophile active site attacks the C1' of nucleotide 34 to detach the guanine base from the RNA, forming a covalent enzyme-RNA intermediate. The proton acceptor active site deprotonates the incoming queuine, allowing a nucleophilic attack on the C1' of the ribose to form the product. The chain is Queuine tRNA-ribosyltransferase catalytic subunit 1 from Danio rerio (Zebrafish).